We begin with the raw amino-acid sequence, 689 residues long: DNA polymerase epsilon subunit B (689 aa).

The segment covering glutamate 98 to threonine 115 has biased composition (basic and acidic residues). Positions glutamate 98–proline 155 are disordered. Over residues aspartate 116 to methionine 126 the composition is skewed to acidic residues. A Phosphoserine modification is found at serine 122. Residues serine 132–arginine 144 are compositionally biased toward polar residues. Position 141 is a phosphoserine; by CDC28 (serine 141). Residues proline 146–proline 155 show a composition bias toward basic and acidic residues. Phosphoserine is present on serine 613.

The protein belongs to the DNA polymerase epsilon subunit B family. In terms of assembly, DNA polymerase epsilon is a heterotetramer consisting of POL2, DPB2, DPB3 and DPB4. In terms of processing, phosphorylated in a cell cycle dependent manner during late G1 phase. Phosphorylation may facilitate the interaction with POL2 or the activity of DNA polymerase II. Phosphorylation is independent of DNA replication but dependent upon CDC28 in vivo. Both Ser-141 and Ser-613 are phosphorylated in vivo, but in vitro only Ser-141 is phosphorylated by CDC28.

The protein localises to the cytoplasm. It is found in the nucleus. Its function is as follows. As accessory component of the DNA polymerase epsilon complex participates in chromosomal DNA replication. It is required during synthesis of the leading and lagging DNA strands at the replication fork and binds at/or near replication origins and moves along DNA with the replication fork. It has 3'-5' proofreading exonuclease activity that correct errors arising during DNA replication. It is also involved in DNA synthesis during DNA repair. The chain is DNA polymerase epsilon subunit B (DPB2) from Saccharomyces cerevisiae (strain ATCC 204508 / S288c) (Baker's yeast).